A 602-amino-acid chain; its full sequence is Isocyanide synthase A (602 aa).

It belongs to the isocyanide synthase family.

Functionally, isocyanide synthase involved in the biosynthesis of isocyanides (or isonitriles), a class of microbial secondary metabolites. The presence of an isonitrile moiety within a compound imparts unique biological (cytotoxic, antibacterial, and antiprotozoal) and chemical (transition metal coordination) properties and enables synthetic and biochemical applications. The chain is Isocyanide synthase A from Aspergillus fumigatus (strain ATCC MYA-4609 / CBS 101355 / FGSC A1100 / Af293) (Neosartorya fumigata).